Consider the following 139-residue polypeptide: Sec-independent protein translocase protein TatB (139 aa).

The chain crosses the membrane as a helical span at residues 1-21 (MFDMGFLELMLIGVVALLVLG). Over residues 66–86 (QQRKLDAGLGKVRDEVERHGD) the composition is skewed to basic and acidic residues. A disordered region spans residues 66–139 (QQRKLDAGLG…APSAKDSNAP (74 aa)).

Belongs to the TatB family. As to quaternary structure, the Tat system comprises two distinct complexes: a TatABC complex, containing multiple copies of TatA, TatB and TatC subunits, and a separate TatA complex, containing only TatA subunits. Substrates initially bind to the TatABC complex, which probably triggers association of the separate TatA complex to form the active translocon.

The protein localises to the cell inner membrane. Its function is as follows. Part of the twin-arginine translocation (Tat) system that transports large folded proteins containing a characteristic twin-arginine motif in their signal peptide across membranes. Together with TatC, TatB is part of a receptor directly interacting with Tat signal peptides. TatB may form an oligomeric binding site that transiently accommodates folded Tat precursor proteins before their translocation. The chain is Sec-independent protein translocase protein TatB from Chromohalobacter salexigens (strain ATCC BAA-138 / DSM 3043 / CIP 106854 / NCIMB 13768 / 1H11).